Reading from the N-terminus, the 260-residue chain is Opacity protein opA58 (260 aa).

Residues 1 to 23 (MNPAPKKPSLLFSSLLFSSAAQA) form the signal peptide.

This sequence belongs to the opacity porin family.

The protein resides in the cell outer membrane. Its function is as follows. Implicated in a number of adherence functions. OPA proteins are implicated in pathogenesis and are subject to phase variation. The sequence is that of Opacity protein opA58 (opaJ) from Neisseria gonorrhoeae.